The primary structure comprises 136 residues: Phosphoribosyl-AMP cyclohydrolase (136 aa).

Mg(2+) is bound at residue aspartate 92. Cysteine 93 contributes to the Zn(2+) binding site. Mg(2+) is bound by residues aspartate 94 and aspartate 96. Cysteine 109 and cysteine 116 together coordinate Zn(2+).

It belongs to the PRA-CH family. Homodimer. Mg(2+) serves as cofactor. The cofactor is Zn(2+).

It localises to the cytoplasm. It carries out the reaction 1-(5-phospho-beta-D-ribosyl)-5'-AMP + H2O = 1-(5-phospho-beta-D-ribosyl)-5-[(5-phospho-beta-D-ribosylamino)methylideneamino]imidazole-4-carboxamide. The protein operates within amino-acid biosynthesis; L-histidine biosynthesis; L-histidine from 5-phospho-alpha-D-ribose 1-diphosphate: step 3/9. Its activity is regulated as follows. Reversibly inhibited by EDTA and free zinc ions. Enzyme is inactivated by dialysis against 1,10-phenanthroline, which is a zinc specific chelator. Its function is as follows. Catalyzes the hydrolysis of the adenine ring of phosphoribosyl-AMP. The sequence is that of Phosphoribosyl-AMP cyclohydrolase from Methanococcus vannielii.